Consider the following 28-residue polypeptide: Phospholipase A2 2 (28 aa).

The protein belongs to the phospholipase A2 family. Group I subfamily. It depends on Ca(2+) as a cofactor. As to expression, expressed by the venom gland.

The protein localises to the secreted. It catalyses the reaction a 1,2-diacyl-sn-glycero-3-phosphocholine + H2O = a 1-acyl-sn-glycero-3-phosphocholine + a fatty acid + H(+). In terms of biological role, snake venom phospholipase A2 (PLA2) that inhibits neuromuscular transmission by blocking acetylcholine release from the nerve termini. PLA2 catalyzes the calcium-dependent hydrolysis of the 2-acyl groups in 3-sn-phosphoglycerides. The protein is Phospholipase A2 2 of Micrurus nigrocinctus (Central American coral snake).